We begin with the raw amino-acid sequence, 141 residues long: NADH dehydrogenase [ubiquinone] 1 alpha subcomplex subunit 11 (141 aa).

At A2 the chain carries N-acetylalanine. The next 2 helical transmembrane spans lie at 21–43 and 58–80; these read KAYITTALGGLCGLISSAYSITH and RFTFTAAAIGAMFGLTTCVSAQV.

Belongs to the complex I NDUFA11 subunit family. As to quaternary structure, complex I is composed of 45 different subunits.

Its subcellular location is the mitochondrion inner membrane. Its function is as follows. Accessory subunit of the mitochondrial membrane respiratory chain NADH dehydrogenase (Complex I), that is believed not to be involved in catalysis. Complex I functions in the transfer of electrons from NADH to the respiratory chain. The immediate electron acceptor for the enzyme is believed to be ubiquinone. This is NADH dehydrogenase [ubiquinone] 1 alpha subcomplex subunit 11 (Ndufa11) from Rattus norvegicus (Rat).